The chain runs to 353 residues: D-alanine--D-alanine ligase (353 aa).

Positions lysine 141–aspartate 349 constitute an ATP-grasp domain. Glutamate 176–glutamate 231 lines the ATP pocket. Mg(2+) contacts are provided by aspartate 302, glutamate 316, and asparagine 318.

It belongs to the D-alanine--D-alanine ligase family. The cofactor is Mg(2+). It depends on Mn(2+) as a cofactor.

It localises to the cytoplasm. It carries out the reaction 2 D-alanine + ATP = D-alanyl-D-alanine + ADP + phosphate + H(+). The protein operates within cell wall biogenesis; peptidoglycan biosynthesis. Its function is as follows. Cell wall formation. This chain is D-alanine--D-alanine ligase, found in Synechococcus sp. (strain WH7803).